Here is a 527-residue protein sequence, read N- to C-terminus: Serine/threonine-protein kinase CHK1 (527 aa).

One can recognise a Protein kinase domain in the interval 15-281 (VVLGDTVGQG…LKALKLHPWV (267 aa)). ATP is bound by residues 21–29 (VGQGAFACV) and Lys45. Asp142 serves as the catalytic Proton acceptor.

It belongs to the protein kinase superfamily. CAMK Ser/Thr protein kinase family. NIM1 subfamily.

It is found in the nucleus. It catalyses the reaction L-seryl-[protein] + ATP = O-phospho-L-seryl-[protein] + ADP + H(+). The enzyme catalyses L-threonyl-[protein] + ATP = O-phospho-L-threonyl-[protein] + ADP + H(+). Functionally, serine/threonine-protein kinase which is required for checkpoint-mediated cell cycle arrest and activation of DNA repair in response to the presence of DNA damage or unreplicated DNA. May also negatively regulate cell cycle progression during unperturbed cell cycles. Controls phosphorylation and abundance of PDS1 to prevent anaphase entry. Also helps prevent mitotic exit. This chain is Serine/threonine-protein kinase CHK1 (CHK1), found in Saccharomyces cerevisiae (strain ATCC 204508 / S288c) (Baker's yeast).